A 556-amino-acid polypeptide reads, in one-letter code: MKNDIEIAQSAKMEPIINIAKKIGLGEDDIELYGKYKCKISLDAIKKLENNKDGKLVLVTAINPTPAGEGKSTVTVGLGQALNKIGKNTVIALREPSLGPVFGIKGGAAGGGYAQVVPMEDINLHFTGDMHAITSANNLLCAAIDNHIHQGNLLRIDSRRIVFKRVMDMNDRALRNIVVGMGGKINGFLREDGFMITVASEIMAILCMASDLEDLKERMGNILIAYNLDGEPVYAKELEVQGAMALLMKDAIKPNLVQTLENTPAIIHGGPFANIAHGCNSIIATKTALKMSDITITEAGFGADLGAEKFLDIKCRYGNLNPDCVVLVATIRALKHHGGVKKDELNISNVDALNKGMKNLEKQIENIKAYGVPVVVAINKFITDSDEEVKAIEDFCKNIGVEVSLTEVWEKGGEGGIDLANKVIKTMETEPSNFKMIYDSEESIKDKILKIVQTIYGGKGVNYTPQALKQIAEIEKFNLDKLPICMAKTQYSLSDNPSLLGRPENFDITVKEVRVSNGAGFIVVLTGDVMTMPGLPKVPAANRMDIKDNGEIVGLF.

65–72 (TPAGEGKS) provides a ligand contact to ATP.

It belongs to the formate--tetrahydrofolate ligase family.

It catalyses the reaction (6S)-5,6,7,8-tetrahydrofolate + formate + ATP = (6R)-10-formyltetrahydrofolate + ADP + phosphate. It participates in one-carbon metabolism; tetrahydrofolate interconversion. In Clostridium perfringens (strain 13 / Type A), this protein is Formate--tetrahydrofolate ligase.